Consider the following 696-residue polypeptide: SEC14 domain and spectrin repeat-containing protein 1 (696 aa).

The 153-residue stretch at 1 to 153 (MEASVILPIL…DFGGSLTYDH (153 aa)) folds into the CRAL-TRIO domain. Spectrin repeat units follow at residues 275-378 (EEIQ…NLLQ), 381-494 (LEFH…LKML), and 500-602 (FKCE…HRLE).

This sequence belongs to the SOLO family. As to quaternary structure, interacts (via the spectrin 1 repeat) with TRPC4 and TRPC5 (via CIRB domain). Interacts with CTNNB1. As to expression, broad expression. High expression in thalamus and brain. Significantly expressed in vasculature.

May act as the primary docking protein directing membrane turnover and assembly of the transient receptor potential channels TRPC4 and TRPC5. Binds phospholipids such as phosphatidylinositol monophosphates, phosphatidylinositol diphosphates (PIP2s) and phosphatidic acid, but not less polar lipids including phosphatidylcholine, phosphatidylserine, and phosphatidylinositol. The binding to PIP2s is calcium dependent. Might be involved in the plasma membrane localization of CTNNB1. The protein is SEC14 domain and spectrin repeat-containing protein 1 (SESTD1) of Homo sapiens (Human).